A 367-amino-acid chain; its full sequence is Methylthioribose-1-phosphate isomerase (367 aa).

The Proton donor role is filled by Asp250.

It belongs to the eIF-2B alpha/beta/delta subunits family. MtnA subfamily.

Its subcellular location is the cytoplasm. It is found in the nucleus. The enzyme catalyses 5-(methylsulfanyl)-alpha-D-ribose 1-phosphate = 5-(methylsulfanyl)-D-ribulose 1-phosphate. Its pathway is amino-acid biosynthesis; L-methionine biosynthesis via salvage pathway; L-methionine from S-methyl-5-thio-alpha-D-ribose 1-phosphate: step 1/6. Functionally, catalyzes the interconversion of methylthioribose-1-phosphate (MTR-1-P) into methylthioribulose-1-phosphate (MTRu-1-P). The sequence is that of Methylthioribose-1-phosphate isomerase (IDI2) from Zea mays (Maize).